The primary structure comprises 486 residues: Pup--protein ligase (486 aa).

Residue Glu-33 coordinates Mg(2+). Position 76 (Arg-76) interacts with ATP. Tyr-78 serves as a coordination point for Mg(2+). Residue Asp-80 is the Proton acceptor of the active site. Glu-86 serves as a coordination point for Mg(2+). Residues Thr-89 and Trp-451 each coordinate ATP.

This sequence belongs to the Pup ligase/Pup deamidase family. Pup-conjugating enzyme subfamily.

The catalysed reaction is ATP + [prokaryotic ubiquitin-like protein]-L-glutamate + [protein]-L-lysine = ADP + phosphate + N(6)-([prokaryotic ubiquitin-like protein]-gamma-L-glutamyl)-[protein]-L-lysine.. It functions in the pathway protein degradation; proteasomal Pup-dependent pathway. It participates in protein modification; protein pupylation. In terms of biological role, catalyzes the covalent attachment of the prokaryotic ubiquitin-like protein modifier Pup to the proteasomal substrate proteins, thereby targeting them for proteasomal degradation. This tagging system is termed pupylation. The ligation reaction involves the side-chain carboxylate of the C-terminal glutamate of Pup and the side-chain amino group of a substrate lysine. In Bifidobacterium longum (strain NCC 2705), this protein is Pup--protein ligase.